Consider the following 420-residue polypeptide: Glutamate dehydrogenase (420 aa).

The active site involves Lys105. 220-226 is an NAD(+) binding site; that stretch reads GYGNAGY.

The protein belongs to the Glu/Leu/Phe/Val dehydrogenases family. As to quaternary structure, homohexamer.

It localises to the cytoplasm. It catalyses the reaction L-glutamate + NAD(+) + H2O = 2-oxoglutarate + NH4(+) + NADH + H(+). The catalysed reaction is L-glutamate + NADP(+) + H2O = 2-oxoglutarate + NH4(+) + NADPH + H(+). The sequence is that of Glutamate dehydrogenase (gdhA) from Pyrococcus abyssi (strain GE5 / Orsay).